The following is a 334-amino-acid chain: Probable GTP 3',8-cyclase (334 aa).

One can recognise a Radical SAM core domain in the interval Pro-24 to Glu-256. Arg-33 contacts GTP. The [4Fe-4S] cluster site is built by Cys-40 and Cys-44. Tyr-46 contributes to the S-adenosyl-L-methionine binding site. Residue Cys-47 participates in [4Fe-4S] cluster binding. Lys-85 serves as a coordination point for GTP. Gly-89 contacts S-adenosyl-L-methionine. Thr-113 lines the GTP pocket. Ser-137 lines the S-adenosyl-L-methionine pocket. A GTP-binding site is contributed by Lys-176. [4Fe-4S] cluster is bound by residues Cys-269 and Cys-272. GTP is bound at residue Arg-274–Arg-276. A [4Fe-4S] cluster-binding site is contributed by Cys-286.

It belongs to the radical SAM superfamily. MoaA family. [4Fe-4S] cluster serves as cofactor.

The catalysed reaction is GTP + AH2 + S-adenosyl-L-methionine = (8S)-3',8-cyclo-7,8-dihydroguanosine 5'-triphosphate + 5'-deoxyadenosine + L-methionine + A + H(+). It functions in the pathway cofactor biosynthesis; molybdopterin biosynthesis. Its function is as follows. Catalyzes the cyclization of GTP to (8S)-3',8-cyclo-7,8-dihydroguanosine 5'-triphosphate. In Methanosarcina acetivorans (strain ATCC 35395 / DSM 2834 / JCM 12185 / C2A), this protein is Probable GTP 3',8-cyclase.